Consider the following 908-residue polypeptide: Structural core protein VP2 (908 aa).

Residues 1 to 19 show a composition bias toward polar residues; that stretch reads MANPQNRVQTERQQNNSSP. The segment at 1–25 is disordered; it reads MANPQNRVQTERQQNNSSPYLRGDE.

It belongs to the orbivirus VP3 family.

It localises to the virion. This Ixodes (gulls) protein is Structural core protein VP2 (Segment-2).